A 290-amino-acid polypeptide reads, in one-letter code: Acetylglutamate kinase (290 aa).

Residues 72–73 (GG), Arg-94, and Asn-187 contribute to the substrate site.

This sequence belongs to the acetylglutamate kinase family. ArgB subfamily.

The protein resides in the plastid. It localises to the chloroplast. It catalyses the reaction N-acetyl-L-glutamate + ATP = N-acetyl-L-glutamyl 5-phosphate + ADP. It functions in the pathway amino-acid biosynthesis; L-arginine biosynthesis; N(2)-acetyl-L-ornithine from L-glutamate: step 2/4. Catalyzes the ATP-dependent phosphorylation of N-acetyl-L-glutamate. The sequence is that of Acetylglutamate kinase from Cyanidioschyzon merolae (strain NIES-3377 / 10D) (Unicellular red alga).